A 316-amino-acid chain; its full sequence is Annexin D5 (316 aa).

The residue at position 2 (alanine 2) is an N-acetylalanine. Annexin repeat units follow at residues 11 to 82 (PSPR…LWMP), 83 to 154 (EAVE…AYLN), 166 to 238 (ASVE…TILQ), and 242 to 313 (NSCF…SLLG). Residues phenylalanine 24, glycine 26, glycine 28, and glutamate 68 each coordinate Ca(2+). Serine 95 carries the post-translational modification Phosphoserine. At threonine 112 the chain carries Phosphothreonine. Ca(2+) is bound at residue glycine 259. Tyrosine 284 bears the Phosphotyrosine mark. 2 residues coordinate Ca(2+): aspartate 299 and threonine 300.

The protein belongs to the annexin (TC 1.A.31.1) family. Expressed mainly in roots and flowers. Lower in stems and leaves.

The protein is Annexin D5 (ANN5) of Arabidopsis thaliana (Mouse-ear cress).